The following is a 761-amino-acid chain: Zinc finger protein 711 (761 aa).

Residues lysine 224, lysine 235, and lysine 296 each participate in a glycyl lysine isopeptide (Lys-Gly) (interchain with G-Cter in SUMO2) cross-link. 5 C2H2-type zinc fingers span residues 383 to 408 (YPCHICTKKFKSRGFLKRHMKNHPDH), 414 to 436 (YQCTDCDFTTNKKVSFHNHLESH), 476 to 499 (HKCKYCDYETAEQGLLNRHLLAVH), 505 to 527 (HVCVECGKGFRHPSELKKHMRTH), and 533 to 556 (YQCQYCIFRCADQSNLKTHIKSKH). Residues 515–761 (RHPSELKKHM…IMRHHKEALM (247 aa)) are required for transcriptional activation. The C2H2-type 6; atypical zinc-finger motif lies at 562–584 (YKCEHCPQAFGDERELQRHLDLF). Positions 564, 567, and 580 each coordinate Zn(2+). 6 consecutive C2H2-type zinc fingers follow at residues 590-613 (HQCPHCDHKSTNSSDLKRHIISVH), 619-641 (HKCEVCDKGFHRPSELKKHSDIH), 647-670 (HQCRHCDFKTSDPFILSGHILSVH), 676-698 (LKCKRCKRGFRQQNELKKHMKTH), 704-727 (YQCEYCEYSTTDASGFKRHVISIH), and 733-755 (HRCEFCKKGFRRPSEKNQHIMRH).

This sequence belongs to the krueppel C2H2-type zinc-finger protein family. Interacts with PHF8. Expressed in neural tissues.

Its subcellular location is the nucleus. Functionally, transcription regulator required for brain development. Probably acts as a transcription factor that binds to the promoter of target genes and recruits PHF8 histone demethylase, leading to activated expression of genes involved in neuron development, such as KDM5C. May compete with transcription factor ARX for activation of expression of KDM5C. The sequence is that of Zinc finger protein 711 (ZNF711) from Homo sapiens (Human).